Reading from the N-terminus, the 383-residue chain is Dual-specificity RNA methyltransferase RlmN (383 aa).

The Proton acceptor role is filled by glutamate 93. Positions 99 to 339 constitute a Radical SAM core domain; the sequence is EETRGTLCVS…TTIRKTRGDD (241 aa). Cysteine 106 and cysteine 344 are disulfide-bonded. [4Fe-4S] cluster-binding residues include cysteine 113, cysteine 117, and cysteine 120. S-adenosyl-L-methionine-binding positions include 170–171, serine 202, 224–226, and asparagine 301; these read GE and SLH. Cysteine 344 acts as the S-methylcysteine intermediate in catalysis.

It belongs to the radical SAM superfamily. RlmN family. [4Fe-4S] cluster is required as a cofactor.

It is found in the cytoplasm. It catalyses the reaction adenosine(2503) in 23S rRNA + 2 reduced [2Fe-2S]-[ferredoxin] + 2 S-adenosyl-L-methionine = 2-methyladenosine(2503) in 23S rRNA + 5'-deoxyadenosine + L-methionine + 2 oxidized [2Fe-2S]-[ferredoxin] + S-adenosyl-L-homocysteine. The catalysed reaction is adenosine(37) in tRNA + 2 reduced [2Fe-2S]-[ferredoxin] + 2 S-adenosyl-L-methionine = 2-methyladenosine(37) in tRNA + 5'-deoxyadenosine + L-methionine + 2 oxidized [2Fe-2S]-[ferredoxin] + S-adenosyl-L-homocysteine. Specifically methylates position 2 of adenine 2503 in 23S rRNA and position 2 of adenine 37 in tRNAs. m2A2503 modification seems to play a crucial role in the proofreading step occurring at the peptidyl transferase center and thus would serve to optimize ribosomal fidelity. In Ralstonia nicotianae (strain ATCC BAA-1114 / GMI1000) (Ralstonia solanacearum), this protein is Dual-specificity RNA methyltransferase RlmN.